Consider the following 171-residue polypeptide: tRNA-splicing endonuclease (171 aa).

Active-site residues include Y110, H117, and K148.

This sequence belongs to the tRNA-intron endonuclease family. Archaeal short subfamily. As to quaternary structure, homotetramer; although the tetramer contains four active sites, only two participate in the cleavage. Therefore, it should be considered as a dimer of dimers.

It carries out the reaction pretRNA = a 3'-half-tRNA molecule with a 5'-OH end + a 5'-half-tRNA molecule with a 2',3'-cyclic phosphate end + an intron with a 2',3'-cyclic phosphate and a 5'-hydroxyl terminus.. In terms of biological role, endonuclease that removes tRNA introns. Cleaves pre-tRNA at the 5'- and 3'-splice sites to release the intron. The products are an intron and two tRNA half-molecules bearing 2',3' cyclic phosphate and 5'-OH termini. Recognizes a pseudosymmetric substrate in which 2 bulged loops of 3 bases are separated by a stem of 4 bp. This Thermococcus onnurineus (strain NA1) protein is tRNA-splicing endonuclease.